Here is a 1436-residue protein sequence, read N- to C-terminus: DNA-directed RNA polymerase subunit beta' (1436 aa).

Residues cysteine 70, cysteine 72, cysteine 85, and cysteine 88 each coordinate Zn(2+). Mg(2+) contacts are provided by aspartate 481, aspartate 483, and aspartate 485. Cysteine 829, cysteine 903, cysteine 910, and cysteine 913 together coordinate Zn(2+).

This sequence belongs to the RNA polymerase beta' chain family. The RNAP catalytic core consists of 2 alpha, 1 beta, 1 beta' and 1 omega subunit. When a sigma factor is associated with the core the holoenzyme is formed, which can initiate transcription. Requires Mg(2+) as cofactor. The cofactor is Zn(2+).

It carries out the reaction RNA(n) + a ribonucleoside 5'-triphosphate = RNA(n+1) + diphosphate. DNA-dependent RNA polymerase catalyzes the transcription of DNA into RNA using the four ribonucleoside triphosphates as substrates. The chain is DNA-directed RNA polymerase subunit beta' from Flavobacterium johnsoniae (strain ATCC 17061 / DSM 2064 / JCM 8514 / BCRC 14874 / CCUG 350202 / NBRC 14942 / NCIMB 11054 / UW101) (Cytophaga johnsonae).